The following is a 622-amino-acid chain: Chaperone protein HscA homolog (622 aa).

Belongs to the heat shock protein 70 family.

In terms of biological role, chaperone involved in the maturation of iron-sulfur cluster-containing proteins. Has a low intrinsic ATPase activity which is markedly stimulated by HscB. The chain is Chaperone protein HscA homolog from Acidovorax sp. (strain JS42).